A 721-amino-acid chain; its full sequence is Catalase-peroxidase 1 (721 aa).

Positions 98 to 223 (WHAAGSYRVA…LAAVQMGLIY (126 aa)) form a cross-link, tryptophyl-tyrosyl-methioninium (Trp-Tyr) (with M-249). His-99 functions as the Proton acceptor in the catalytic mechanism. The tryptophyl-tyrosyl-methioninium (Tyr-Met) (with W-98) cross-link spans 223 to 249 (YVNPEGVNGQPDPLRTAQDVRVTFGRM). His-264 contacts heme b.

Belongs to the peroxidase family. Peroxidase/catalase subfamily. Homodimer or homotetramer. Requires heme b as cofactor. In terms of processing, formation of the three residue Trp-Tyr-Met cross-link is important for the catalase, but not the peroxidase activity of the enzyme.

It carries out the reaction H2O2 + AH2 = A + 2 H2O. The enzyme catalyses 2 H2O2 = O2 + 2 H2O. Bifunctional enzyme with both catalase and broad-spectrum peroxidase activity. The polypeptide is Catalase-peroxidase 1 (Legionella pneumophila (strain Paris)).